The sequence spans 31 residues: Toxin BmKK12 (31 aa).

The residue at position 1 (glutamine 1) is a Pyrrolidone carboxylic acid. Disulfide bonds link cysteine 4/cysteine 20, cysteine 10/cysteine 25, and cysteine 14/cysteine 27. Proline 31 carries the post-translational modification Proline amide.

Belongs to the short scorpion toxin superfamily. Potassium channel inhibitor family. Alpha-KTx 17 subfamily. The N-terminus is blocked. Expressed by the venom gland.

It localises to the secreted. Its function is as follows. Blocker of potassium channels (Kv). In Olivierus martensii (Manchurian scorpion), this protein is Toxin BmKK12.